The sequence spans 208 residues: GTP-binding protein Rho1 (208 aa).

19–26 (GDGACGKT) serves as a coordination point for GTP. The short motif at 41-49 (YVPTVFDNY) is the Effector region element. GTP-binding positions include 66–70 (DTAGQ) and 124–127 (CKAD). Residues 188-208 (GKQGKSKPKTKSSKKKKCVVL) are disordered. Positions 191-208 (GKSKPKTKSSKKKKCVVL) are enriched in basic residues. Cys205 is modified (cysteine methyl ester). Cys205 is lipidated: S-geranylgeranyl cysteine. Positions 206-208 (VVL) are cleaved as a propeptide — removed in mature form.

It belongs to the small GTPase superfamily. Rho family.

It is found in the cell membrane. In Kluyveromyces lactis (strain ATCC 8585 / CBS 2359 / DSM 70799 / NBRC 1267 / NRRL Y-1140 / WM37) (Yeast), this protein is GTP-binding protein Rho1 (RHO1).